We begin with the raw amino-acid sequence, 63 residues long: Cytochrome c oxidase subunit 7C, mitochondrial (63 aa).

The N-terminal 16 residues, 1-16, are a transit peptide targeting the mitochondrion; it reads MLGQSIRRFTTSVVRR. Residues 17–34 are Mitochondrial matrix-facing; sequence SHYEEGPGKNLPFSVENK. Lysine 25 carries the N6-acetyllysine; alternate modification. Residue lysine 25 is modified to N6-succinyllysine; alternate. A helical transmembrane segment spans residues 35-57; sequence WRLLAMMTVYFGSGFAAPFFIVR. Topologically, residues 58-63 are mitochondrial intermembrane; sequence HQLLKK.

It belongs to the cytochrome c oxidase VIIc family. In terms of assembly, component of the cytochrome c oxidase (complex IV, CIV), a multisubunit enzyme composed of 14 subunits. The complex is composed of a catalytic core of 3 subunits MT-CO1, MT-CO2 and MT-CO3, encoded in the mitochondrial DNA, and 11 supernumerary subunits COX4I, COX5A, COX5B, COX6A, COX6B, COX6C, COX7A, COX7B, COX7C, COX8 and NDUFA4, which are encoded in the nuclear genome. The complex exists as a monomer or a dimer and forms supercomplexes (SCs) in the inner mitochondrial membrane with NADH-ubiquinone oxidoreductase (complex I, CI) and ubiquinol-cytochrome c oxidoreductase (cytochrome b-c1 complex, complex III, CIII), resulting in different assemblies (supercomplex SCI(1)III(2)IV(1) and megacomplex MCI(2)III(2)IV(2)). Interacts with RAB5IF.

The protein resides in the mitochondrion inner membrane. It functions in the pathway energy metabolism; oxidative phosphorylation. In terms of biological role, component of the cytochrome c oxidase, the last enzyme in the mitochondrial electron transport chain which drives oxidative phosphorylation. The respiratory chain contains 3 multisubunit complexes succinate dehydrogenase (complex II, CII), ubiquinol-cytochrome c oxidoreductase (cytochrome b-c1 complex, complex III, CIII) and cytochrome c oxidase (complex IV, CIV), that cooperate to transfer electrons derived from NADH and succinate to molecular oxygen, creating an electrochemical gradient over the inner membrane that drives transmembrane transport and the ATP synthase. Cytochrome c oxidase is the component of the respiratory chain that catalyzes the reduction of oxygen to water. Electrons originating from reduced cytochrome c in the intermembrane space (IMS) are transferred via the dinuclear copper A center (CU(A)) of subunit 2 and heme A of subunit 1 to the active site in subunit 1, a binuclear center (BNC) formed by heme A3 and copper B (CU(B)). The BNC reduces molecular oxygen to 2 water molecules using 4 electrons from cytochrome c in the IMS and 4 protons from the mitochondrial matrix. The chain is Cytochrome c oxidase subunit 7C, mitochondrial (Cox7c) from Mus musculus (Mouse).